Consider the following 384-residue polypeptide: FAD-dependent urate hydroxylase (384 aa).

FAD is bound by residues glycine 11, 30-31 (EA), serine 43, and valine 125. Substrate is bound by residues asparagine 178, arginine 204, and 216–218 (YFF). FAD is bound by residues aspartate 285 and 295 to 299 (GQGGC).

Belongs to the FAD-dependent urate hydroxylase family. The cofactor is FAD.

It carries out the reaction urate + NADH + O2 + H(+) = 5-hydroxyisourate + NAD(+) + H2O. It participates in purine metabolism; urate degradation. Its function is as follows. Catalyzes the hydroxylation of uric acid to 5-hydroxyisourate. The polypeptide is FAD-dependent urate hydroxylase (hpxO) (Klebsiella pneumoniae).